The following is a 377-amino-acid chain: N-acetyldiaminopimelate deacetylase (377 aa).

Asp-69 is a catalytic residue. The active-site Proton acceptor is Glu-128.

It belongs to the peptidase M20A family. N-acetyldiaminopimelate deacetylase subfamily.

It catalyses the reaction N-acetyl-(2S,6S)-2,6-diaminopimelate + H2O = (2S,6S)-2,6-diaminopimelate + acetate. The protein operates within amino-acid biosynthesis; L-lysine biosynthesis via DAP pathway; LL-2,6-diaminopimelate from (S)-tetrahydrodipicolinate (acetylase route): step 3/3. Its function is as follows. Catalyzes the conversion of N-acetyl-diaminopimelate to diaminopimelate and acetate. The protein is N-acetyldiaminopimelate deacetylase of Streptococcus gordonii (strain Challis / ATCC 35105 / BCRC 15272 / CH1 / DL1 / V288).